The chain runs to 198 residues: IMP cyclohydrolase (198 aa).

Belongs to the archaeal IMP cyclohydrolase family.

It catalyses the reaction IMP + H2O = 5-formamido-1-(5-phospho-D-ribosyl)imidazole-4-carboxamide. It functions in the pathway purine metabolism; IMP biosynthesis via de novo pathway; IMP from 5-formamido-1-(5-phospho-D-ribosyl)imidazole-4-carboxamide: step 1/1. In terms of biological role, catalyzes the cyclization of 5-formylamidoimidazole-4-carboxamide ribonucleotide to IMP. This is IMP cyclohydrolase from Thermococcus kodakarensis (strain ATCC BAA-918 / JCM 12380 / KOD1) (Pyrococcus kodakaraensis (strain KOD1)).